The following is a 217-amino-acid chain: Small ribosomal subunit protein uS3c (217 aa).

The KH type-2 domain maps to 39 to 109 (IRNFLRTKLI…RFRITITYIP (71 aa)).

This sequence belongs to the universal ribosomal protein uS3 family. In terms of assembly, part of the 30S ribosomal subunit.

It is found in the plastid. The protein resides in the chloroplast. The sequence is that of Small ribosomal subunit protein uS3c (rps3) from Chlorokybus atmophyticus (Soil alga).